Consider the following 418-residue polypeptide: Putative ion-transport protein YfeO (418 aa).

Transmembrane regions (helical) follow at residues Leu-10 to Val-30, Asp-54 to Ile-74, Ala-99 to Pro-119, Glu-120 to Pro-140, Ile-149 to Ile-169, Leu-186 to Pro-206, Ile-223 to Cys-243, Val-258 to Val-278, Asp-300 to Phe-320, Gly-322 to His-342, Val-343 to Val-363, and Leu-371 to Met-391.

Belongs to the chloride channel (TC 2.A.49) family.

It is found in the cell membrane. The polypeptide is Putative ion-transport protein YfeO (Escherichia coli O17:K52:H18 (strain UMN026 / ExPEC)).